The sequence spans 99 residues: PE family protein PE13 (99 aa).

Residues 1–93 (MSFVMAYPEM…ASSYAATEVA (93 aa)) form the PE domain.

The protein belongs to the mycobacterial PE family.

The protein resides in the secreted. Its subcellular location is the cell wall. In terms of biological role, may play a pivotal role in the interaction between M.tuberculosis and host. Can enhance the survival within macrophages under stress conditions such as H(2)O(2), SDS and low pH. Increases the production of IL-6 and IL-1beta from macrophages, and decreases the secretion of suppressor of cytokine signaling 3 (SOCS-3). These changes probably involve the p38-ERK-NF-kappa-B signaling pathway. Also precipitates the macrophage death. In Mycobacterium tuberculosis (strain ATCC 25618 / H37Rv), this protein is PE family protein PE13.